A 3914-amino-acid polypeptide reads, in one-letter code: Trichosetin synthetase PKS-NRPS1 (3914 aa).

The Ketosynthase family 3 (KS3) domain maps to 4–420 (NEPIAIIGSA…GTNAHAIIEA (417 aa)). Catalysis depends on for beta-ketoacyl synthase activity residues C177, H301, and H340. Positions 525-847 (VLTGQGAQWP…REKDDIQQFA (323 aa)) are malonyl-CoA:ACP transacylase (MAT) domain. Positions 913–1047 (HPILGRRCHD…AHVKASLSVP (135 aa)) are N-terminal hotdog fold. The dehydratase (DH) domain stretch occupies residues 913 to 1214 (HPILGRRCHD…MELVPFSPAT (302 aa)). Positions 913-1216 (HPILGRRCHD…LVPFSPATPE (304 aa)) constitute a PKS/mFAS DH domain. H946 serves as the catalytic Proton acceptor; for dehydratase activity. Residues 1062-1216 (LRKVEVDRFY…LVPFSPATPE (155 aa)) form a C-terminal hotdog fold region. D1122 (proton donor; for dehydratase activity) is an active-site residue. Residues 1364–1593 (EGFGLDLVNK…DLPETKSTEL (230 aa)) form a methyltransferase (MT) domain region. Positions 2083 to 2255 (TFLLIGLSGE…VAASSIDISS (173 aa)) are ketoreductase (KR) domain. The region spanning 2356–2436 (LADVKTKADA…DLIEESLNLI (81 aa)) is the Carrier 1 domain. Position 2396 is an O-(pantetheine 4'-phosphoryl)serine (S2396). The interval 2447–2518 (EAGSTPTTQP…DSTDNSTPLK (72 aa)) is disordered. A compositionally biased stretch (polar residues) spans 2481-2500 (QQTGSDSSRSPIDTPLTSME). The tract at residues 2529-2956 (SYGQAGFWFL…VQGTNKAADT (428 aa)) is condensation (C) domain. Residues 2991–3388 (QTIQANSTKV…LLFCDGRLED (398 aa)) are adenylation (A) (KR) domain. The Carrier 2 domain occupies 3502 to 3579 (GTLTVAEQRL…TMAVVLESCG (78 aa)). S3539 is subject to O-(pantetheine 4'-phosphoryl)serine. The segment at 3615–3831 (LTGSAGYLGR…VLPTGDIVKA (217 aa)) is reductase (RED) domain.

In the C-terminal section; belongs to the NRP synthetase family.

It catalyses the reaction L-serine + 7 malonyl-CoA + acetyl-CoA + 2 S-adenosyl-L-methionine + ATP + 8 NADPH + 11 H(+) = (5S)-3-[(2E,6R,8E,10E,12E)-2,6-dimethyltetradeca-2,8,10,12-tetraenoyl]-5-(hydroxymethyl)pyrrolidine-2,4-dione + AMP + 2 S-adenosyl-L-homocysteine + 7 CO2 + diphosphate + 8 NADP(+) + 8 CoA + 6 H2O. Its pathway is mycotoxin biosynthesis. Hybrid PKS-NRPS synthetase; part of the gene cluster that mediates the biosynthesis of trichosetin, a trans-fused decalin-containing tetramic acid with antimicrobial activity. The PKS module of PKS-NRPS1 together with the enoylreductase (ER) catalyze the formation of the polyketide unit which is then conjugated to L-serine by the condensation domain of the PKS-NRPS1 NRPS module. Activity of the Dieckmann cyclase domain (RED) results in release of the Dieckmann product intermediate. Diels-Alderase (DA) is involved in endo-selective Diels-Alder cycloaddition to form the decalin ring, leading to the production of N-desmethylequisetin also called trichosetin. The cluster does not contain the equisetin N-methyltransferase and consequently, trichosetin is isolated as final product. This Gibberella fujikuroi (strain CBS 195.34 / IMI 58289 / NRRL A-6831) (Bakanae and foot rot disease fungus) protein is Trichosetin synthetase PKS-NRPS1.